The sequence spans 408 residues: MTHPDPTLFGHDPWWLMLAKAVAIFVFLLLTVLSAILIERKLLGRMQMRFGPNRVGPAGLLQSLADGIKLALKEGLVPAGVDKPIYLLAPVISVIPAFVAFSVIPLGGAVSVFGHRTPLQLTDLPVAVLFILAATSIGVYGIVLAGWASGSTYPLLGGLRSSAQVVSYEIAMGLSFVAVFLYAGTMSTSGIVAAQDRTWFVFLLLPSFLVYVVSMVGETNRAPFDLPEAEGELVGGFHTEYSSLKFAMFMLAEYVNMTTVSALATTMFLGGWHAPFPFNLIDGANSGWWPLLWFTAKVWTFMFLYFWLRATLPRLRYDQFMALGWKVLIPVSLLWIMVVAITRSLRQHGEGTWAAWLLTAAVVVVVALIWGLATSLRRRTVQPPPPQSTGAYPVPPLPSVGTKETADA.

9 consecutive transmembrane segments (helical) span residues 18–38 (LAKAVAIFVFLLLTVLSAILI), 84–104 (PIYLLAPVISVIPAFVAFSVI), 124–144 (LPVAVLFILAATSIGVYGIVL), 165–185 (VVSYEIAMGLSFVAVFLYAGT), 198–218 (TWFVFLLLPSFLVYVVSMVGE), 261–281 (SALATTMFLGGWHAPFPFNLI), 288–308 (WWPLLWFTAKVWTFMFLYFWL), 321–341 (MALGWKVLIPVSLLWIMVVAI), and 353–373 (WAAWLLTAAVVVVVALIWGLA). Residues 381 to 408 (VQPPPPQSTGAYPVPPLPSVGTKETADA) form a disordered region. A compositionally biased stretch (pro residues) spans 382 to 398 (QPPPPQSTGAYPVPPLP).

The protein belongs to the complex I subunit 1 family. As to quaternary structure, NDH-1 is composed of 14 different subunits. Subunits NuoA, H, J, K, L, M, N constitute the membrane sector of the complex.

The protein localises to the cell membrane. It catalyses the reaction a quinone + NADH + 5 H(+)(in) = a quinol + NAD(+) + 4 H(+)(out). Its function is as follows. NDH-1 shuttles electrons from NADH, via FMN and iron-sulfur (Fe-S) centers, to quinones in the respiratory chain. The immediate electron acceptor for the enzyme in this species is believed to be menaquinone. Couples the redox reaction to proton translocation (for every two electrons transferred, four hydrogen ions are translocated across the cytoplasmic membrane), and thus conserves the redox energy in a proton gradient. This subunit may bind ubiquinone. The protein is NADH-quinone oxidoreductase subunit H of Mycolicibacterium smegmatis (strain ATCC 700084 / mc(2)155) (Mycobacterium smegmatis).